The chain runs to 416 residues: UDP-N-acetylglucosamine 1-carboxyvinyltransferase (416 aa).

Position 22-23 (22-23 (KN)) interacts with phosphoenolpyruvate. R92 serves as a coordination point for UDP-N-acetyl-alpha-D-glucosamine. C116 (proton donor) is an active-site residue. The residue at position 116 (C116) is a 2-(S-cysteinyl)pyruvic acid O-phosphothioketal. Positions 304 and 326 each coordinate UDP-N-acetyl-alpha-D-glucosamine.

The protein belongs to the EPSP synthase family. MurA subfamily.

It localises to the cytoplasm. The enzyme catalyses phosphoenolpyruvate + UDP-N-acetyl-alpha-D-glucosamine = UDP-N-acetyl-3-O-(1-carboxyvinyl)-alpha-D-glucosamine + phosphate. The protein operates within cell wall biogenesis; peptidoglycan biosynthesis. In terms of biological role, cell wall formation. Adds enolpyruvyl to UDP-N-acetylglucosamine. In Solidesulfovibrio magneticus (strain ATCC 700980 / DSM 13731 / RS-1) (Desulfovibrio magneticus), this protein is UDP-N-acetylglucosamine 1-carboxyvinyltransferase.